The sequence spans 311 residues: tRNA pseudouridine synthase B (311 aa).

Asp52 acts as the Nucleophile in catalysis.

This sequence belongs to the pseudouridine synthase TruB family. Type 1 subfamily.

The catalysed reaction is uridine(55) in tRNA = pseudouridine(55) in tRNA. Functionally, responsible for synthesis of pseudouridine from uracil-55 in the psi GC loop of transfer RNAs. This is tRNA pseudouridine synthase B from Burkholderia mallei (strain ATCC 23344).